A 38-amino-acid polypeptide reads, in one-letter code: Potassium channel toxin alpha-KTx 3.8 (38 aa).

Intrachain disulfides connect C8-C28, C14-C33, and C18-C35. The interval 26-33 (GKCMNGKC) is interaction with Ca(2+)-activated K(+) channels.

As to expression, expressed by the venom gland.

It localises to the secreted. Potassium channel inhibitor. The polypeptide is Potassium channel toxin alpha-KTx 3.8 (Hottentotta tamulus sindicus (Scorpion)).